The primary structure comprises 428 residues: Adenylosuccinate synthetase (428 aa).

GTP-binding positions include 12–18 and 40–42; these read GDEGKGK and GHT. Residue D13 is the Proton acceptor of the active site. Positions 13 and 40 each coordinate Mg(2+). IMP contacts are provided by residues 13-16, 38-41, T128, R142, Q223, T238, and R302; these read DEGK and NAGH. Catalysis depends on H41, which acts as the Proton donor. Substrate is bound at residue 298-304; sequence VTTGRPR. Residues R304, 330 to 332, and 412 to 414 each bind GTP; these read KLD and GVG.

Belongs to the adenylosuccinate synthetase family. Homodimer. Requires Mg(2+) as cofactor.

Its subcellular location is the cytoplasm. It carries out the reaction IMP + L-aspartate + GTP = N(6)-(1,2-dicarboxyethyl)-AMP + GDP + phosphate + 2 H(+). The protein operates within purine metabolism; AMP biosynthesis via de novo pathway; AMP from IMP: step 1/2. Functionally, plays an important role in the de novo pathway of purine nucleotide biosynthesis. Catalyzes the first committed step in the biosynthesis of AMP from IMP. The polypeptide is Adenylosuccinate synthetase (Halothermothrix orenii (strain H 168 / OCM 544 / DSM 9562)).